Consider the following 198-residue polypeptide: Virion infectivity factor (198 aa).

An RNA-binding region spans residues 76-115; it reads GERPWHLGHGIGLEWRQGKYSTQIDPETADQLIHTRYFTC. The residue at position 97 (threonine 97) is a Phosphothreonine; by host MAP4K1. Positions 109–140 match the HCCH motif motif; that stretch reads HTRYFTCFAAGAVRQAILGERILTFCHFQSGH. Residue threonine 145 is modified to Phosphothreonine; by host. The BC-box-like motif motif lies at 145–154; the sequence is TLQFLAFRKV. The segment at 152 to 170 is multimerization; that stretch reads RKVVESQDKQPKGPRRPLP. The disordered stretch occupies residues 159-198; that stretch reads DKQPKGPRRPLPSVTKLTEDRWNKHRTTTGRRENHTLSGC. At serine 171 the chain carries Phosphoserine; by host MAP4K1. The tract at residues 177 to 178 is membrane association; it reads ED. The segment covering 188–198 has biased composition (basic and acidic residues); it reads GRRENHTLSGC.

Belongs to the primate lentivirus group Vif protein family. Homomultimer; in vitro and presumably in vivo. Interacts with viral Pr55Gag precursor, host APOBEC3G, UBCE7IP1 isoform 3/ZIN, ABCE1 and possibly with SAT. Forms an E3 ligase complex by interacting with host CUL5 and elongin BC complex (ELOB and ELOC). Highly phosphorylated on serine and threonine residues. Thr-97 and Ser-171 are phosphorylated by the mitogen activated kinase MAP4K1. Post-translationally, polyubiquitinated and degraded by the proteasome in the presence of APOBEC3G.

Its subcellular location is the host cytoplasm. The protein localises to the host cell membrane. It is found in the virion. Counteracts the innate antiviral activity of APOBEC3G. Forms a complex with host APOBEC3G thus preventing the entry of this lethally hypermutating enzyme into progeny virions. Functions as an adapter molecule, recruiting APOBEC3G to the ubiquitin-proteasome machinery. Targets APOBEC3G for degradation through the assembly with elongin BC complex, CUL5 and RBX1. Binds viral RNA and affects the stability of viral nucleoprotein core. May play a role in viral morphology. Interacts with host ABCE1, which seems to be involved in lentiviruses capsid formation and displays RNase L inhibitor activity. This interaction may play a role in protecting viral RNA from damage during viral assembly. May interact with host SAT, which is a regulator of polyamine cell level. This interaction may be relevant since polyamines affect viral RNA properties. In Pan troglodytes (Chimpanzee), this protein is Virion infectivity factor.